A 485-amino-acid polypeptide reads, in one-letter code: MRSALSLKPSNGNAAKSQAVNNKNVIKNAPLGGKLTRQIGTSNLLQQALPSKKIDESPIIKIDAKDSFKVFEDQEPEKENSSENVDATEKDSNVIPAEDNNMIHELERKMEEKSRAEKLKFKFMQTRDNSDITSRFSEPPSEFSVLCDDDDCDKVSVASSTFTTSVRATFSSFHFDENQRKKEFGKEEAVKKIQKKAAKEARDDSMFSSEEFFPDIIKYMLHRQTKNRASHECFDIQSQVNEEMRTILIDWFSDVVKEYNFQKETFHLAVSLVDRALSMFNIDKMRFQLVGTTSMMIAVKYEEIFPPEIEDFALITDNTYRVPDILLMERFLLGKFDFVVAMPTSSWFGTCFAKRMNFTKKMRNTVHYLLELSLIDVHFLRYRPSDIAAAACCFANLQADVESWPQKMVDDTGISTEDFVDVLRDLHRMYLNASTADFKSIFYNYSETAQMEVALLPAPTDKLRSMFPSIFVTAPKSSNDSSSPQ.

Residues 1–24 (MRSALSLKPSNGNAAKSQAVNNKN) are disordered. The span at 8–24 (KPSNGNAAKSQAVNNKN) shows a compositional bias: polar residues.

This sequence belongs to the cyclin family. Cyclin AB subfamily. As to expression, expressed in the cell lineages ABarp, C and E as well as the NSM neuroblasts.

Functionally, involved in the control of the cell cycle after S phase. May bind to and activate cdk-1 and/or cdk-2 to promote cell cycle progression. Necessary for embryogenesis. The polypeptide is G2/mitotic-specific cyclin-A1 (cya-1) (Caenorhabditis elegans).